We begin with the raw amino-acid sequence, 194 residues long: Putative 3-methyladenine DNA glycosylase (194 aa).

The protein belongs to the DNA glycosylase MPG family.

The chain is Putative 3-methyladenine DNA glycosylase from Synechococcus elongatus (strain ATCC 33912 / PCC 7942 / FACHB-805) (Anacystis nidulans R2).